Here is a 52-residue protein sequence, read N- to C-terminus: Insulin (52 aa).

Intrachain disulfides connect Cys-7–Cys-38, Cys-19–Cys-51, and Cys-37–Cys-42.

This sequence belongs to the insulin family. In terms of assembly, heterodimer of a B chain and an A chain linked by two disulfide bonds.

It is found in the secreted. In terms of biological role, insulin decreases blood glucose concentration. It increases cell permeability to monosaccharides, amino acids and fatty acids. It accelerates glycolysis, the pentose phosphate cycle, and glycogen synthesis in liver. The protein is Insulin (ins) of Atractosteus spatula (Alligator gar).